The sequence spans 103 residues: N(4)-acetylcytidine amidohydrolase (103 aa).

Residues isoleucine 6–lysine 101 form the ASCH domain. The active-site Proton acceptor is lysine 21. The active-site Nucleophile is the threonine 24. Glutamate 74 functions as the Proton donor in the catalytic mechanism.

The protein belongs to the N(4)-acetylcytidine amidohydrolase family.

The catalysed reaction is N(4)-acetylcytidine + H2O = cytidine + acetate + H(+). It catalyses the reaction N(4)-acetyl-2'-deoxycytidine + H2O = 2'-deoxycytidine + acetate + H(+). It carries out the reaction N(4)-acetylcytosine + H2O = cytosine + acetate + H(+). Catalyzes the hydrolysis of N(4)-acetylcytidine (ac4C). This chain is N(4)-acetylcytidine amidohydrolase (yqfB), found in Escherichia coli (strain SMS-3-5 / SECEC).